We begin with the raw amino-acid sequence, 331 residues long: Phosphate acyltransferase (331 aa).

Belongs to the PlsX family. Homodimer. Probably interacts with PlsY.

It is found in the cytoplasm. It carries out the reaction a fatty acyl-[ACP] + phosphate = an acyl phosphate + holo-[ACP]. It participates in lipid metabolism; phospholipid metabolism. Catalyzes the reversible formation of acyl-phosphate (acyl-PO(4)) from acyl-[acyl-carrier-protein] (acyl-ACP). This enzyme utilizes acyl-ACP as fatty acyl donor, but not acyl-CoA. The sequence is that of Phosphate acyltransferase from Ureaplasma parvum serovar 3 (strain ATCC 27815 / 27 / NCTC 11736).